The chain runs to 102 residues: Acid shock protein (102 aa).

Residues 1 to 21 (MKKVLALVVAAAMGLSSAAFA) form the signal peptide. The span at 22–41 (AETATTPAPTATTTKAAPAK) shows a compositional bias: low complexity. The propeptide occupies 22 to 58 (AETATTPAPTATTTKAAPAKTTHHKKQHKAAPAQKAQ). The disordered stretch occupies residues 22 to 102 (AETATTPAPT…PAKPAAQPAA (81 aa)). A compositionally biased stretch (basic residues) spans 80–90 (AAKKHAGKHGH). The segment covering 91–102 (QQPAKPAAQPAA) has biased composition (low complexity).

It belongs to the Asr family. Proteolytic processing gives rise to the active protein.

It is found in the periplasm. In terms of biological role, required for growth and/or survival at acidic conditions. This Shigella flexneri protein is Acid shock protein.